The primary structure comprises 261 residues: uncharacterized protein (261 aa).

The a divalent metal cation site is built by D43, H45, D75, N106, H197, and H199.

This sequence belongs to the metallophosphoesterase superfamily. The cofactor is a divalent metal cation.

This is an uncharacterized protein from Aquifex aeolicus (strain VF5).